Here is a 317-residue protein sequence, read N- to C-terminus: Methionyl-tRNA formyltransferase (317 aa).

113–116 contacts (6S)-5,6,7,8-tetrahydrofolate; the sequence is SLLP.

Belongs to the Fmt family.

It carries out the reaction L-methionyl-tRNA(fMet) + (6R)-10-formyltetrahydrofolate = N-formyl-L-methionyl-tRNA(fMet) + (6S)-5,6,7,8-tetrahydrofolate + H(+). Attaches a formyl group to the free amino group of methionyl-tRNA(fMet). The formyl group appears to play a dual role in the initiator identity of N-formylmethionyl-tRNA by promoting its recognition by IF2 and preventing the misappropriation of this tRNA by the elongation apparatus. The chain is Methionyl-tRNA formyltransferase from Pseudomonas fluorescens (strain SBW25).